The following is a 162-amino-acid chain: MTGKQHQKHEQKARQAQVKAQINRDKARSKLLRQREKLARRRARNRRQSEVRRGNQSKAQHDTQSETQRGTQSKSQRDNETGGTKNPTAHSTLPPQKTNAENAVRNSHSTVPELPKYSSVPARERLYGLRLHRETTASEDKSVTVAVTRAPKAERQRGGADE.

The tract at residues 1–162 (MTGKQHQKHE…AERQRGGADE (162 aa)) is disordered. 2 stretches are compositionally biased toward basic and acidic residues: residues 22 to 37 (INRDKARSKLLRQREK) and 47 to 64 (RQSEVRRGNQSKAQHDTQ). Composition is skewed to polar residues over residues 65–74 (SETQRGTQSK) and 81–110 (TGGTKNPTAHSTLPPQKTNAENAVRNSHST). 2 stretches are compositionally biased toward basic and acidic residues: residues 122-142 (ARERLYGLRLHRETTASEDKS) and 151-162 (PKAERQRGGADE).

Belongs to the gas vesicle GvpI family. As to quaternary structure, gvpF to GvpM interact with each other in vitro, and may form multi-subunit complex(es). Interacts with GvpC and GvpO.

It is found in the gas vesicle. Functionally, proteins GvpF to GvpM might be involved in nucleating gas vesicle formation. A minor component of the gas vesicle. Gas vesicles are hollow, gas filled proteinaceous nanostructures found in some microorganisms. They allow positioning of halobacteria at the optimal depth for growth in the poorly aerated, shallow brine pools of their habitat. Expression of a 9.5 kb mc-vac DNA fragment containing 2 divergently transcribed regions (gvpD-gvpE-gvpF-gvpG-gvpH-gvpI-gvpJ-gvpK-gvpL-gvpM and gvpA-gvpC-gvpN-gvpO) allows H.volcanii to produce gas vesicles. The polypeptide is Gas vesicle protein I (Haloferax mediterranei (strain ATCC 33500 / DSM 1411 / JCM 8866 / NBRC 14739 / NCIMB 2177 / R-4) (Halobacterium mediterranei)).